The sequence spans 374 residues: tRNA-specific 2-thiouridylase MnmA (374 aa).

ATP is bound by residues 13–20 (GMSGGVDS) and M39. An interaction with target base in tRNA region spans residues 99–101 (NPD). C104 (nucleophile) is an active-site residue. C104 and C201 are joined by a disulfide. G128 provides a ligand contact to ATP. Residues 151–153 (KDQ) are interaction with tRNA. C201 serves as the catalytic Cysteine persulfide intermediate. Residues 313–314 (RY) are interaction with tRNA.

This sequence belongs to the MnmA/TRMU family.

It localises to the cytoplasm. It catalyses the reaction S-sulfanyl-L-cysteinyl-[protein] + uridine(34) in tRNA + AH2 + ATP = 2-thiouridine(34) in tRNA + L-cysteinyl-[protein] + A + AMP + diphosphate + H(+). In terms of biological role, catalyzes the 2-thiolation of uridine at the wobble position (U34) of tRNA, leading to the formation of s(2)U34. This chain is tRNA-specific 2-thiouridylase MnmA, found in Streptococcus equi subsp. equi (strain 4047).